Consider the following 388-residue polypeptide: S-adenosylmethionine synthase 1 (388 aa).

Glutamate 11 is a Mg(2+) binding site. Histidine 17 lines the ATP pocket. Glutamate 45 provides a ligand contact to K(+). L-methionine-binding residues include glutamate 58 and glutamine 101. ATP-binding positions include 168–170, 233–236, aspartate 244, 250–251, alanine 267, lysine 271, and lysine 275; these read DAK, SGRF, and RK. Aspartate 244 is an L-methionine binding site. An L-methionine-binding site is contributed by lysine 275.

The protein belongs to the AdoMet synthase family. In terms of assembly, homotetramer. It depends on Mn(2+) as a cofactor. The cofactor is Mg(2+). Co(2+) is required as a cofactor. Requires K(+) as cofactor. In terms of tissue distribution, mostly in Roots.

Its subcellular location is the cytoplasm. The enzyme catalyses L-methionine + ATP + H2O = S-adenosyl-L-methionine + phosphate + diphosphate. It functions in the pathway amino-acid biosynthesis; S-adenosyl-L-methionine biosynthesis; S-adenosyl-L-methionine from L-methionine: step 1/1. In terms of biological role, catalyzes the formation of S-adenosylmethionine from methionine and ATP. The reaction comprises two steps that are both catalyzed by the same enzyme: formation of S-adenosylmethionine (AdoMet) and triphosphate, and subsequent hydrolysis of the triphosphate. This is S-adenosylmethionine synthase 1 (SAMS1) from Pinus contorta (Shore pine).